Consider the following 484-residue polypeptide: Putative beta-barrel assembly-enhancing protease (484 aa).

The signal sequence occupies residues 1–23 (MKFFPTRTLLCLCIAAPCLPAIA). His-133 serves as a coordination point for Zn(2+). Glu-134 is a catalytic residue. Zn(2+)-binding residues include His-137 and Glu-198. The active-site Proton donor is Asp-202. 4 TPR repeats span residues 307–340 (PSIQ…QPDN), 341–374 (HFYL…TPNN), 376–408 (VLTI…NPND), and 426–459 (AEDL…VELG).

The protein belongs to the peptidase M48 family. BepA subfamily. Zn(2+) serves as cofactor.

The protein localises to the periplasm. In terms of biological role, functions both as a chaperone and a metalloprotease. Maintains the integrity of the outer membrane by promoting either the assembly or the elimination of outer membrane proteins, depending on their folding state. This chain is Putative beta-barrel assembly-enhancing protease, found in Vibrio cholerae serotype O1 (strain ATCC 39315 / El Tor Inaba N16961).